The chain runs to 832 residues: FAST kinase domain-containing protein 1, mitochondrial (832 aa).

Residues Val765–Lys825 enclose the RAP domain.

The protein belongs to the FAST kinase family.

It localises to the mitochondrion. In terms of biological role, may regulate the stability of some mitochondrial mRNA species. This is FAST kinase domain-containing protein 1, mitochondrial (fastkd1) from Xenopus laevis (African clawed frog).